The following is a 374-amino-acid chain: Flap endonuclease 1 (374 aa).

Positions 1–105 (MGVKGLNQLI…GELEKRMIRK (105 aa)) are N-domain. A Mg(2+)-binding site is contributed by Asp34. Residues Arg47 and Arg71 each coordinate DNA. Asp87, Glu159, Glu161, Asp180, and Asp182 together coordinate Mg(2+). Residues 123–254 (EMVRYEKRSV…VTAFKLIKEH (132 aa)) form an I-domain region. Residue Glu159 coordinates DNA. DNA-binding residues include Gly232 and Asp234. Asp234 lines the Mg(2+) pocket. Residues 341 to 349 (VQGRLDGFF) are interaction with PCNA. The segment covering 354–365 (TEKRKPEQDKKT) has biased composition (basic and acidic residues). Positions 354–374 (TEKRKPEQDKKTKGSKKAKKK) are disordered.

This sequence belongs to the XPG/RAD2 endonuclease family. FEN1 subfamily. Interacts with PCNA. Three molecules of FEN1 bind to one PCNA trimer with each molecule binding to one PCNA monomer. PCNA stimulates the nuclease activity without altering cleavage specificity. The cofactor is Mg(2+). Phosphorylated. Phosphorylation upon DNA damage induces relocalization to the nuclear plasma.

The protein localises to the nucleus. Its subcellular location is the nucleolus. It is found in the nucleoplasm. It localises to the mitochondrion. In terms of biological role, structure-specific nuclease with 5'-flap endonuclease and 5'-3' exonuclease activities involved in DNA replication and repair. During DNA replication, cleaves the 5'-overhanging flap structure that is generated by displacement synthesis when DNA polymerase encounters the 5'-end of a downstream Okazaki fragment. It enters the flap from the 5'-end and then tracks to cleave the flap base, leaving a nick for ligation. Also involved in the long patch base excision repair (LP-BER) pathway, by cleaving within the apurinic/apyrimidinic (AP) site-terminated flap. Acts as a genome stabilization factor that prevents flaps from equilibrating into structures that lead to duplications and deletions. Also possesses 5'-3' exonuclease activity on nicked or gapped double-stranded DNA, and exhibits RNase H activity. Also involved in replication and repair of rDNA and in repairing mitochondrial DNA. The polypeptide is Flap endonuclease 1 (Meyerozyma guilliermondii (strain ATCC 6260 / CBS 566 / DSM 6381 / JCM 1539 / NBRC 10279 / NRRL Y-324) (Yeast)).